We begin with the raw amino-acid sequence, 312 residues long: tRNA pseudouridine synthase B (312 aa).

D46 acts as the Nucleophile in catalysis. Substrate contacts are provided by Y74, Y177, and L198.

Belongs to the pseudouridine synthase TruB family. Type 1 subfamily.

The enzyme catalyses uridine(55) in tRNA = pseudouridine(55) in tRNA. Functionally, responsible for synthesis of pseudouridine from uracil-55 in the psi GC loop of transfer RNAs. In Buchnera aphidicola subsp. Schizaphis graminum (strain Sg), this protein is tRNA pseudouridine synthase B.